The following is a 374-amino-acid chain: Pectate lyase 2 (374 aa).

Residues 1–22 (MKYLLPTAATGLLLLAAQPAVA) form the signal peptide. C93 and C176 are disulfide-bonded. Ca(2+)-binding residues include D150, D152, E187, and D191. The active site involves R239. C350 and C373 form a disulfide bridge.

The protein belongs to the polysaccharide lyase 1 family. PLADES subfamily. It depends on Ca(2+) as a cofactor.

It is found in the secreted. It carries out the reaction Eliminative cleavage of (1-&gt;4)-alpha-D-galacturonan to give oligosaccharides with 4-deoxy-alpha-D-galact-4-enuronosyl groups at their non-reducing ends.. The protein operates within glycan metabolism; pectin degradation; 2-dehydro-3-deoxy-D-gluconate from pectin: step 2/5. In terms of biological role, involved in maceration and soft-rotting of plant tissue. In Pectobacterium atrosepticum (strain SCRI 1043 / ATCC BAA-672) (Erwinia carotovora subsp. atroseptica), this protein is Pectate lyase 2 (pel2).